The primary structure comprises 307 residues: Carbamate kinase (307 aa).

Belongs to the carbamate kinase family.

Its subcellular location is the cytoplasm. It carries out the reaction hydrogencarbonate + NH4(+) + ATP = carbamoyl phosphate + ADP + H2O + H(+). Its pathway is metabolic intermediate metabolism; carbamoyl phosphate degradation; CO(2) and NH(3) from carbamoyl phosphate: step 1/1. Its function is as follows. Carbamate kinase involved in the arginine deiminase pathway of fermentative arginine utilization. The protein is Carbamate kinase (arcC) of Halobacterium salinarum (strain ATCC 700922 / JCM 11081 / NRC-1) (Halobacterium halobium).